Here is a 242-residue protein sequence, read N- to C-terminus: Endoglucanase (242 aa).

The signal sequence occupies residues 1 to 21; sequence MQVIVLPLVFLATFATSGSLA. Residue Asp-47 is the Nucleophile of the active site. N-linked (GlcNAc...) asparagine glycosylation is found at Asn-79, Asn-103, and Asn-217.

It belongs to the glycosyl hydrolase 45 (cellulase K) family. Expressed in larval carcasses and gut, and adult gut.

The protein resides in the secreted. It carries out the reaction Endohydrolysis of (1-&gt;4)-beta-D-glucosidic linkages in cellulose, lichenin and cereal beta-D-glucans.. The sequence is that of Endoglucanase from Phaedon cochleariae (Mustard beetle).